A 503-amino-acid polypeptide reads, in one-letter code: UDP-N-acetylmuramoylalanine--D-glutamate ligase (503 aa).

129–135 serves as a coordination point for ATP; that stretch reads GTNGKTT.

It belongs to the MurCDEF family.

It is found in the cytoplasm. It catalyses the reaction UDP-N-acetyl-alpha-D-muramoyl-L-alanine + D-glutamate + ATP = UDP-N-acetyl-alpha-D-muramoyl-L-alanyl-D-glutamate + ADP + phosphate + H(+). Its pathway is cell wall biogenesis; peptidoglycan biosynthesis. Functionally, cell wall formation. Catalyzes the addition of glutamate to the nucleotide precursor UDP-N-acetylmuramoyl-L-alanine (UMA). This chain is UDP-N-acetylmuramoylalanine--D-glutamate ligase, found in Burkholderia vietnamiensis (strain G4 / LMG 22486) (Burkholderia cepacia (strain R1808)).